Consider the following 389-residue polypeptide: Phospholipid phosphatase-related protein type 2 (389 aa).

2 consecutive transmembrane segments (helical) span residues 14–34 (IIPC…AFFP) and 66–86 (FLGV…AGQV). An N-linked (GlcNAc...) asparagine glycan is attached at asparagine 102. 3 helical membrane passes run 147 to 167 (AALC…VFRV), 176 to 196 (SLCL…VAEY), and 203 to 223 (VLAG…CVVH). 2 positions are modified to phosphoserine: serine 236 and serine 249. Disordered regions lie at residues 255–280 (SVAQ…PQNC) and 295–351 (APAM…GRKL). A compositionally biased stretch (polar residues) spans 265–278 (SHSTPARLTPSKPQ). Residues 314-339 (TPLPLPLPLPAPAPSQGPSPSSPGPG) show a composition bias toward pro residues.

Belongs to the PA-phosphatase related phosphoesterase family.

The protein resides in the membrane. The sequence is that of Phospholipid phosphatase-related protein type 2 from Bos taurus (Bovine).